A 481-amino-acid polypeptide reads, in one-letter code: Abietadienol/abietadienal oxidase (481 aa).

Residues 2–22 (ADQISLLLVVFTAAVALLHLI) traverse the membrane as a helical segment. A heme-binding site is contributed by Cys-430.

The protein belongs to the cytochrome P450 family. It depends on heme as a cofactor. As to expression, expressed in young tissues such as flushing buds and green bark tissues. Lower levels in mature needles and bark.

The protein localises to the membrane. The catalysed reaction is abieta-7,13-dien-18-ol + 2 reduced [NADPH--hemoprotein reductase] + 2 O2 = abieta-7,13-dien-18-oate + 2 oxidized [NADPH--hemoprotein reductase] + 3 H2O + 3 H(+). In terms of biological role, multifunctional and multisubstrate cytochrome P450 that oxidizes the respective carbon 18 of abietadienol, abietadienal, levopimaradienol, isopimara-7,15-dienol, isopimara-7,15-dienal, dehydroabietadienol, and dehydroabietadienal. This is Abietadienol/abietadienal oxidase (CYP720B1) from Pinus taeda (Loblolly pine).